A 482-amino-acid polypeptide reads, in one-letter code: Peptide chain release factor PrfB2, chloroplastic (482 aa).

A chloroplast-targeting transit peptide spans 1 to 21; it reads MLSLIIRRSRSRFIIHGIKIS.

The protein belongs to the prokaryotic/mitochondrial release factor family.

It is found in the plastid. The protein localises to the chloroplast stroma. Its function is as follows. Directs the termination of translation in response to the peptide chain termination codon UGA. Required for the proper translation, stability and normal processing of UGA-containing polycistronic transcripts in chloroplasts. In Arabidopsis thaliana (Mouse-ear cress), this protein is Peptide chain release factor PrfB2, chloroplastic.